The following is a 39-amino-acid chain: MERNPNPNNLPVELNRTSLYLGLLVVFTTGILFSSYFFN.

The helical transmembrane segment at 18-38 (SLYLGLLVVFTTGILFSSYFF) threads the bilayer.

The protein belongs to the PsbL family. PSII is composed of 1 copy each of membrane proteins PsbA, PsbB, PsbC, PsbD, PsbE, PsbF, PsbH, PsbI, PsbJ, PsbK, PsbL, PsbM, PsbT, PsbX, PsbY, PsbZ, Psb30/Ycf12, peripheral proteins PsbO, CyanoQ (PsbQ), PsbU, PsbV and a large number of cofactors. It forms dimeric complexes.

The protein localises to the cellular thylakoid membrane. One of the components of the core complex of photosystem II (PSII). PSII is a light-driven water:plastoquinone oxidoreductase that uses light energy to abstract electrons from H(2)O, generating O(2) and a proton gradient subsequently used for ATP formation. It consists of a core antenna complex that captures photons, and an electron transfer chain that converts photonic excitation into a charge separation. This subunit is found at the monomer-monomer interface and is required for correct PSII assembly and/or dimerization. The sequence is that of Photosystem II reaction center protein L from Synechococcus sp. (strain WH7803).